We begin with the raw amino-acid sequence, 257 residues long: Imidazole glycerol phosphate synthase subunit HisF (257 aa).

Catalysis depends on residues Asp-11 and Asp-130.

It belongs to the HisA/HisF family. Heterodimer of HisH and HisF.

It localises to the cytoplasm. It carries out the reaction 5-[(5-phospho-1-deoxy-D-ribulos-1-ylimino)methylamino]-1-(5-phospho-beta-D-ribosyl)imidazole-4-carboxamide + L-glutamine = D-erythro-1-(imidazol-4-yl)glycerol 3-phosphate + 5-amino-1-(5-phospho-beta-D-ribosyl)imidazole-4-carboxamide + L-glutamate + H(+). It participates in amino-acid biosynthesis; L-histidine biosynthesis; L-histidine from 5-phospho-alpha-D-ribose 1-diphosphate: step 5/9. In terms of biological role, IGPS catalyzes the conversion of PRFAR and glutamine to IGP, AICAR and glutamate. The HisF subunit catalyzes the cyclization activity that produces IGP and AICAR from PRFAR using the ammonia provided by the HisH subunit. In Shewanella sp. (strain MR-7), this protein is Imidazole glycerol phosphate synthase subunit HisF.